Reading from the N-terminus, the 351-residue chain is NAD-dependent protein deacetylase SIR2rp1 (351 aa).

The Deacetylase sirtuin-type domain occupies histidine 10–glycine 325. NAD(+)-binding positions include glycine 37–tyrosine 57 and glutamine 122–aspartate 125. Histidine 142 acts as the Proton acceptor in catalysis. 4 residues coordinate Zn(2+): cysteine 150, cysteine 153, cysteine 174, and cysteine 177. NAD(+) is bound by residues glycine 213–serine 215 and asparagine 238–glutamate 240. A disordered region spans residues serine 260 to serine 284. The segment covering serine 265–serine 284 has biased composition (low complexity). Cysteine 311 is a binding site for NAD(+).

Belongs to the sirtuin family. Class I subfamily. Zn(2+) is required as a cofactor.

It localises to the nucleus. The protein localises to the chromosome. It is found in the telomere. It carries out the reaction N(6)-acetyl-L-lysyl-[protein] + NAD(+) + H2O = 2''-O-acetyl-ADP-D-ribose + nicotinamide + L-lysyl-[protein]. NAD-dependent protein deacetylase, which is involved in repression of RNA polymerase I-mediated expression immediately adjacent to telomeres. It is however not involved in antigenic variation and subtelomeric variant surface glycoprotein (VSG) gene silencing. Plays a role in DNA damage response. Also has ADP-ribosylation activity in vitro. The polypeptide is NAD-dependent protein deacetylase SIR2rp1 (SIR2rp1) (Trypanosoma brucei brucei (strain 927/4 GUTat10.1)).